We begin with the raw amino-acid sequence, 172 residues long: Adenine phosphoribosyltransferase (172 aa).

It belongs to the purine/pyrimidine phosphoribosyltransferase family. In terms of assembly, homodimer.

The protein resides in the cytoplasm. It carries out the reaction AMP + diphosphate = 5-phospho-alpha-D-ribose 1-diphosphate + adenine. Its pathway is purine metabolism; AMP biosynthesis via salvage pathway; AMP from adenine: step 1/1. Functionally, catalyzes a salvage reaction resulting in the formation of AMP, that is energically less costly than de novo synthesis. The protein is Adenine phosphoribosyltransferase of Streptococcus agalactiae serotype Ia (strain ATCC 27591 / A909 / CDC SS700).